The primary structure comprises 398 residues: NADH dehydrogenase [ubiquinone] iron-sulfur protein 2 (398 aa).

Residues cysteine 261, cysteine 267, and cysteine 282 each coordinate [4Fe-4S] cluster.

This sequence belongs to the complex I 49 kDa subunit family. Complex I is composed of about 45 different subunits. This is a component of the iron-sulfur (IP) fragment of the enzyme. It depends on [4Fe-4S] cluster as a cofactor.

The protein localises to the mitochondrion. It carries out the reaction a ubiquinone + NADH + 5 H(+)(in) = a ubiquinol + NAD(+) + 4 H(+)(out). In terms of biological role, core subunit of the mitochondrial membrane respiratory chain NADH dehydrogenase (Complex I) that is believed to belong to the minimal assembly required for catalysis. Complex I functions in the transfer of electrons from NADH to the respiratory chain. The immediate electron acceptor for the enzyme is believed to be ubiquinone. Component of the iron-sulfur (IP) fragment of the enzyme. This chain is NADH dehydrogenase [ubiquinone] iron-sulfur protein 2 (NAD7), found in Nephroselmis olivacea (Green alga).